The sequence spans 150 residues: Large ribosomal subunit protein bL9 (150 aa).

Belongs to the bacterial ribosomal protein bL9 family.

Binds to the 23S rRNA. This Mycoplasmopsis pulmonis (strain UAB CTIP) (Mycoplasma pulmonis) protein is Large ribosomal subunit protein bL9.